Consider the following 667-residue polypeptide: UvrABC system protein B (667 aa).

The 390-residue stretch at 25–414 (TGLQRGDKHQ…GVVVEQIIRP (390 aa)) folds into the Helicase ATP-binding domain. Position 38–45 (38–45 (GVTGSGKT)) interacts with ATP. The Beta-hairpin motif lies at 91-114 (YYDYYQPEAYVPTTDTFIEKDSSI). A Helicase C-terminal domain is found at 430–596 (QVDDLIHEIR…TVKKSLRSIL (167 aa)). Positions 624 to 659 (KNEIARVKEEMLAAAANLEFEKAAELRDRMLELDKL) constitute a UVR domain.

Belongs to the UvrB family. In terms of assembly, forms a heterotetramer with UvrA during the search for lesions. Interacts with UvrC in an incision complex.

It is found in the cytoplasm. The UvrABC repair system catalyzes the recognition and processing of DNA lesions. A damage recognition complex composed of 2 UvrA and 2 UvrB subunits scans DNA for abnormalities. Upon binding of the UvrA(2)B(2) complex to a putative damaged site, the DNA wraps around one UvrB monomer. DNA wrap is dependent on ATP binding by UvrB and probably causes local melting of the DNA helix, facilitating insertion of UvrB beta-hairpin between the DNA strands. Then UvrB probes one DNA strand for the presence of a lesion. If a lesion is found the UvrA subunits dissociate and the UvrB-DNA preincision complex is formed. This complex is subsequently bound by UvrC and the second UvrB is released. If no lesion is found, the DNA wraps around the other UvrB subunit that will check the other stand for damage. This is UvrABC system protein B from Syntrophotalea carbinolica (strain DSM 2380 / NBRC 103641 / GraBd1) (Pelobacter carbinolicus).